A 194-amino-acid polypeptide reads, in one-letter code: MFPRPVLNSRAQAILLPQPPNMLDHRQWPPRLASFPFTKTGMLSRATSVLAGLTAHLWDLGGGAGRRTSKAQRVHPQPSHQRQPPPPQHPGPYQERIWVGGEGWGEVGGLRLSKVGRRDREVGRGLRAPAGRGRAMGGMPRMGTVGDFGQALSSLAWTSTCFQDFCLPSLPGKLPAPLISKQQFLSNSSRSLFN.

Residues 62–93 (GGAGRRTSKAQRVHPQPSHQRQPPPPQHPGPY) form a disordered region.

Expressed most abundantly in the brain at protein level. Present in cortex, cerebellum and midbrain. Found in neurons. Elevated expressions detected in Alzheimer brain samples. Also expressed in testis.

It is found in the cytoplasm. This is an uncharacterized protein from Homo sapiens (Human).